Reading from the N-terminus, the 75-residue chain is Small ribosomal subunit protein bS18c (75 aa).

Positions 1–12 (MNKSKRSFRRRL) are enriched in basic residues. The segment at 1–21 (MNKSKRSFRRRLPPIGSRDQI) is disordered.

The protein belongs to the bacterial ribosomal protein bS18 family. As to quaternary structure, part of the 30S ribosomal subunit.

The protein localises to the plastid. It is found in the chloroplast. This is Small ribosomal subunit protein bS18c from Cycas taitungensis (Prince sago).